We begin with the raw amino-acid sequence, 350 residues long: Protein SGT1 homolog A (350 aa).

TPR repeat units lie at residues 2-35 (AKELADKAKEAFVDDDFDVAVDLYSKAIDLDPNC), 37-69 (EFFADRAQAYIKLESFTEAVADANKAIELDPSL), and 71-103 (KAYLRKGTACMKLEEYRTAKTALEKGASITPSE). The CS domain maps to 149-238 (TAKYRHEYYQ…ADIITWASLE (90 aa)). The SGS domain occupies 260–350 (AYPSSKKVKD…DGMELKKWEI (91 aa)).

Belongs to the SGT1 family. In terms of assembly, interacts with RAR1. Forms a ternary complex with RAR1 and barley HSP90.

Functionally, functions in R gene-mediated resistance, but participates in a lower extent than SGT1B to RPP5-mediated resistance. Not required for RPM1, RPS2, RPS4 and RPS5-mediated resistance. Probably required for SCF-mediated ubiquitination, by coupling HSP90 to SCF complex for ubiquitination of HSP90 client proteins. The protein is Protein SGT1 homolog A (SGT1A) of Arabidopsis thaliana (Mouse-ear cress).